Here is a 564-residue protein sequence, read N- to C-terminus: MPIRLSKEKINDLLQRSQGDLTSSQDEIVHYTDVFIAGSGPIACTYARHIIDNTSTTKVYMAEIGSQDNPVIGAHHRNSIKFQKDTDKFVNIINGALQPISISPSDTYQPTLAVAAWAPPIDPAEGQLVIMGHNPNQEAGLNLPGSAVTRTVGGMATHWTCACPTPHDEERVNNPVDKQEFDALLERAKTLLNVHSDQYDDSIRQIVVKETLQQTLDASRGVTTLPLGVERRTDNPIYVTWTGADTVLGDVPKSPRFVLVTETRVTKFIVSETNPTQVVAALLRNLNTSNDELVVAQSFVIACGAVCTPQILWNSNIRPHALGRYLSEQSMTFCQIVLKRSIVDSIATDPRFAAKVEAHKKKHPDDVLPIPFHEPEPQVMIPYTSDFPWHVQVHRYAFGDVGPKADPRVVVDLRFFGKSDIVEENRVTFGPNPKLRDWEAGVTDTYGMPQPTFHVKRTNADGDRDQRMMNDMTNVANILGGYLPGSYPQFMAPGLAQHITGTTRIGTDDQTSVADPTSKVHNFDNLWVGGNGCIPDATACNPTRTSVAYALKGAEAVVSYLGVS.

The propeptide occupies 1–25; that stretch reads MPIRLSKEKINDLLQRSQGDLTSSQ. Residue histidine 158 is modified to Tele-8alpha-FAD histidine. Residues glutamine 392 and histidine 394 each contribute to the substrate site. The active-site Proton acceptor is the histidine 498. The active site involves asparagine 541.

The protein belongs to the GMC oxidoreductase family. As to quaternary structure, homotetramer. The cofactor is FAD.

It carries out the reaction D-glucose + O2 = 2-dehydro-D-glucose + H2O2. Catalyzes the oxidation of various aldopyranoses and disaccharides on carbon-2 to the corresponding 2-keto sugars concomitant with the reduction of O(2) to H(2)O(2). The preferred substrate is D-glucose which is converted to 2-dehydro-D-glucose. Acts also on D-xylose, L-sorbose, D-galactose and 1,5-anhydroglucitol, a diagnostic marker of diabetes mellitus. This chain is Pyranose 2-oxidase (p2ox), found in Tricholoma matsutake (Matsutake mushroom).